A 405-amino-acid chain; its full sequence is Argininosuccinate synthase (405 aa).

Residues 10 to 18 (AYSGGLDTS) and alanine 37 contribute to the ATP site. Tyrosine 88 and serine 93 together coordinate L-citrulline. An ATP-binding site is contributed by glycine 118. Threonine 120, asparagine 124, and aspartate 125 together coordinate L-aspartate. Asparagine 124 lines the L-citrulline pocket. L-citrulline is bound by residues arginine 128, serine 179, serine 188, glutamate 264, and tyrosine 276.

This sequence belongs to the argininosuccinate synthase family. Type 1 subfamily. Homotetramer.

It is found in the cytoplasm. The catalysed reaction is L-citrulline + L-aspartate + ATP = 2-(N(omega)-L-arginino)succinate + AMP + diphosphate + H(+). It participates in amino-acid biosynthesis; L-arginine biosynthesis; L-arginine from L-ornithine and carbamoyl phosphate: step 2/3. This Pseudomonas savastanoi pv. phaseolicola (strain 1448A / Race 6) (Pseudomonas syringae pv. phaseolicola (strain 1448A / Race 6)) protein is Argininosuccinate synthase.